The chain runs to 138 residues: Thyrotropin subunit beta (138 aa).

Positions 1 to 20 (MTATFLMSMIFGLACGQAMS) are cleaved as a signal peptide. Disulfide bonds link C22-C72, C36-C87, C39-C125, C47-C103, C51-C105, and C108-C115. N43 is a glycosylation site (N-linked (GlcNAc...) asparagine). Positions 133-138 (MVGFSI) are excised as a propeptide.

Belongs to the glycoprotein hormones subunit beta family. Heterodimer of a common alpha chain and a unique beta chain which confers biological specificity to thyrotropin, lutropin, follitropin and gonadotropin.

It is found in the secreted. In terms of biological role, indispensable for the control of thyroid structure and metabolism. The protein is Thyrotropin subunit beta (TSHB) of Bos taurus (Bovine).